Consider the following 420-residue polypeptide: Acetylornithine aminotransferase (420 aa).

Residues 118 to 119 (GA) and Phe-151 each bind pyridoxal 5'-phosphate. Arg-154 serves as a coordination point for N(2)-acetyl-L-ornithine. Position 242–245 (242–245 (DEVQ)) interacts with pyridoxal 5'-phosphate. An N6-(pyridoxal phosphate)lysine modification is found at Lys-271. Ser-298 contacts N(2)-acetyl-L-ornithine. Thr-299 lines the pyridoxal 5'-phosphate pocket.

The protein belongs to the class-III pyridoxal-phosphate-dependent aminotransferase family. ArgD subfamily. In terms of assembly, homodimer. Requires pyridoxal 5'-phosphate as cofactor.

The protein resides in the cytoplasm. The enzyme catalyses N(2)-acetyl-L-ornithine + 2-oxoglutarate = N-acetyl-L-glutamate 5-semialdehyde + L-glutamate. The protein operates within amino-acid biosynthesis; L-arginine biosynthesis; N(2)-acetyl-L-ornithine from L-glutamate: step 4/4. The protein is Acetylornithine aminotransferase of Parasynechococcus marenigrum (strain WH8102).